The sequence spans 920 residues: Isoleucine--tRNA ligase (920 aa).

The 'HIGH' region signature appears at 58–68; the sequence is PYANGHLHLGH. Glutamate 569 lines the L-isoleucyl-5'-AMP pocket. Residues 610–614 carry the 'KMSKS' region motif; that stretch reads KMSKS. Lysine 613 provides a ligand contact to ATP. Zn(2+) contacts are provided by cysteine 895, cysteine 898, cysteine 910, and cysteine 913.

This sequence belongs to the class-I aminoacyl-tRNA synthetase family. IleS type 1 subfamily. Monomer. The cofactor is Zn(2+).

The protein localises to the cytoplasm. It carries out the reaction tRNA(Ile) + L-isoleucine + ATP = L-isoleucyl-tRNA(Ile) + AMP + diphosphate. Catalyzes the attachment of isoleucine to tRNA(Ile). As IleRS can inadvertently accommodate and process structurally similar amino acids such as valine, to avoid such errors it has two additional distinct tRNA(Ile)-dependent editing activities. One activity is designated as 'pretransfer' editing and involves the hydrolysis of activated Val-AMP. The other activity is designated 'posttransfer' editing and involves deacylation of mischarged Val-tRNA(Ile). The chain is Isoleucine--tRNA ligase from Helicobacter pylori (strain HPAG1).